The following is a 550-amino-acid chain: Cochlin (550 aa).

A signal peptide spans 1 to 24 (MSAAWIPALGLGVCLLLLPGPAGS). The LCCL domain maps to 28-121 (APIAITCFTR…QMLSRWSASF (94 aa)). Disulfide bonds link cysteine 34–cysteine 50 and cysteine 54–cysteine 74. An N-linked (GlcNAc...) asparagine glycan is attached at asparagine 100. Residues 128 to 139 (SSTQEATGQAVS) show a composition bias toward polar residues. A disordered region spans residues 128 to 159 (SSTQEATGQAVSTAHPPTGKRLKKTPEKKTGN). VWFA domains follow at residues 165–346 (DIAF…VKPL) and 367–537 (NIAF…VSDV). An N-linked (GlcNAc...) asparagine glycan is attached at asparagine 221.

As to quaternary structure, monomer. May form homodimer. Interacts with type II collagen. Interacts with SLC44A2. Interacts with ANXA2. Post-translationally, N-glycosylated. A 50 kDa form is created by proteolytic cleavage. Expressed in inner ear structures; the cochlea and the vestibule.

It localises to the secreted. Its subcellular location is the extracellular space. The protein resides in the extracellular matrix. In terms of biological role, plays a role in the control of cell shape and motility in the trabecular meshwork. The chain is Cochlin (COCH) from Homo sapiens (Human).